The sequence spans 201 residues: Imidazole glycerol phosphate synthase subunit HisH (201 aa).

The region spanning 1 to 201 (MVFIADYGAG…LQVLRNFAEC (201 aa)) is the Glutamine amidotransferase type-1 domain. Residue Cys-79 is the Nucleophile of the active site. Residues His-183 and Glu-185 contribute to the active site.

In terms of assembly, heterodimer of HisH and HisF.

The protein localises to the cytoplasm. The catalysed reaction is 5-[(5-phospho-1-deoxy-D-ribulos-1-ylimino)methylamino]-1-(5-phospho-beta-D-ribosyl)imidazole-4-carboxamide + L-glutamine = D-erythro-1-(imidazol-4-yl)glycerol 3-phosphate + 5-amino-1-(5-phospho-beta-D-ribosyl)imidazole-4-carboxamide + L-glutamate + H(+). It catalyses the reaction L-glutamine + H2O = L-glutamate + NH4(+). It participates in amino-acid biosynthesis; L-histidine biosynthesis; L-histidine from 5-phospho-alpha-D-ribose 1-diphosphate: step 5/9. In terms of biological role, IGPS catalyzes the conversion of PRFAR and glutamine to IGP, AICAR and glutamate. The HisH subunit catalyzes the hydrolysis of glutamine to glutamate and ammonia as part of the synthesis of IGP and AICAR. The resulting ammonia molecule is channeled to the active site of HisF. This Chlorobium luteolum (strain DSM 273 / BCRC 81028 / 2530) (Pelodictyon luteolum) protein is Imidazole glycerol phosphate synthase subunit HisH.